The chain runs to 289 residues: Pyridoxal kinase PdxY (289 aa).

Residues serine 9 and threonine 44 to glutamine 45 contribute to the substrate site. ATP is bound by residues aspartate 112, alanine 144, glutamate 149, and lysine 182. Substrate is bound at residue aspartate 225.

Belongs to the pyridoxine kinase family. PdxY subfamily. As to quaternary structure, homodimer. Requires Mg(2+) as cofactor.

The enzyme catalyses pyridoxal + ATP = pyridoxal 5'-phosphate + ADP + H(+). The protein operates within cofactor metabolism; pyridoxal 5'-phosphate salvage; pyridoxal 5'-phosphate from pyridoxal: step 1/1. Its function is as follows. Pyridoxal kinase involved in the salvage pathway of pyridoxal 5'-phosphate (PLP). Catalyzes the phosphorylation of pyridoxal to PLP. In Aliivibrio fischeri (strain ATCC 700601 / ES114) (Vibrio fischeri), this protein is Pyridoxal kinase PdxY.